A 210-amino-acid polypeptide reads, in one-letter code: MQMVSILLLALAVSLDSFSVGFTYGLRKMKIPFKAILVIACCSGAVMFISMLIGSFLTKFFPVYVTEKLGGLILVGIGAWVLYQFFKPAKDKEYLLHEKTLLNLEVRSLGIVIHILRKPMSADIDKSGVINGIEAVLLGFALSIDAFGAGIGAAILGFSPIVMSIAVAIMSSLFVSIGINAGHFLSKWKWIDKMAFLPGLLLITIGLWKL.

Helical transmembrane passes span 6–26 (ILLL…TYGL), 36–56 (ILVI…IGSF), 69–89 (LGGL…FKPA), 129–149 (VING…AFGA), 162–184 (VMSI…AGHF), and 190–210 (WIDK…LWKL).

It localises to the cell membrane. In Bacillus subtilis (strain 168), this protein is Probable sporulation protein YtaF (ytaF).